Consider the following 525-residue polypeptide: Putative EGF-like domain-containing protein R659 (525 aa).

Positions 1–24 (MGNKWCGIFLTILLLAQMSQTIFG) are cleaved as a signal peptide. N-linked (GlcNAc...) asparagine; by host glycosylation is found at asparagine 60, asparagine 77, asparagine 171, asparagine 181, asparagine 268, and asparagine 281. One can recognise an EGF-like domain in the interval 317–359 (LTQGCGNCDSNAECVFVSGSNSIVPKYQCKCKSGYVGNGTHCS). Intrachain disulfides connect cysteine 321–cysteine 330, cysteine 324–cysteine 345, and cysteine 347–cysteine 358. Asparagine 354 and asparagine 411 each carry an N-linked (GlcNAc...) asparagine; by host glycan.

It is found in the secreted. The polypeptide is Putative EGF-like domain-containing protein R659 (Acanthamoeba polyphaga (Amoeba)).